The chain runs to 130 residues: Large ribosomal subunit protein bL12 (130 aa).

It belongs to the bacterial ribosomal protein bL12 family. Homodimer. Part of the ribosomal stalk of the 50S ribosomal subunit. Forms a multimeric L10(L12)X complex, where L10 forms an elongated spine to which 2 to 4 L12 dimers bind in a sequential fashion. Binds GTP-bound translation factors.

Functionally, forms part of the ribosomal stalk which helps the ribosome interact with GTP-bound translation factors. Is thus essential for accurate translation. This chain is Large ribosomal subunit protein bL12, found in Synechococcus sp. (strain RCC307).